The sequence spans 244 residues: MSRRSRSRSRSPKRDREERKRREDRDRDRERKRDRKDRERKRRHRSSSSEGSQAEPHQLGSIFREERRRRERNESPKLPPPPPPPPSDPPVDTSIPFDVSTLNEPTKKWLEEKIVEQVSARVHQLEAMMAEKATSARNEMEKMLRAQIEAEMAVELAECKKRDEESRKKCKQLEAELERKVLEAEESRKKFEEDRLAMLEQKSQLERDRAELARQKSDMKKNEQQAILNKSGNSRAPIKFKFGK.

The segment covering 1 to 11 (MSRRSRSRSRS) has biased composition (basic residues). Disordered stretches follow at residues 1-104 (MSRR…TLNE) and 213-244 (ARQK…KFGK). Over residues 12–31 (PKRDREERKRREDRDRDRER) the composition is skewed to basic and acidic residues. Residues 32 to 46 (KRDRKDRERKRRHRS) show a composition bias toward basic residues. Residues 63–75 (FREERRRRERNES) show a composition bias toward basic and acidic residues. Residues 77–89 (KLPPPPPPPPSDP) are compositionally biased toward pro residues. Positions 213-223 (ARQKSDMKKNE) are enriched in basic and acidic residues. Over residues 224 to 234 (QQAILNKSGNS) the composition is skewed to polar residues.

This is an uncharacterized protein from Caenorhabditis elegans.